Reading from the N-terminus, the 182-residue chain is ATP-dependent protease subunit HslV (182 aa).

Thr10 is a catalytic residue. Positions 166, 169, and 172 each coordinate Na(+).

This sequence belongs to the peptidase T1B family. HslV subfamily. As to quaternary structure, a double ring-shaped homohexamer of HslV is capped on each side by a ring-shaped HslU homohexamer. The assembly of the HslU/HslV complex is dependent on binding of ATP.

The protein localises to the cytoplasm. The enzyme catalyses ATP-dependent cleavage of peptide bonds with broad specificity.. Its activity is regulated as follows. Allosterically activated by HslU binding. Its function is as follows. Protease subunit of a proteasome-like degradation complex believed to be a general protein degrading machinery. This is ATP-dependent protease subunit HslV from Rickettsia prowazekii (strain Madrid E).